The following is a 160-amino-acid chain: Cytochrome b6-f complex subunit 4 (160 aa).

A run of 4 helical transmembrane segments spans residues 36–56 (LLYI…GLAV), 68–88 (PFAT…FQIL), 95–115 (FFGV…PFLE), and 131–151 (SVFL…VLPI).

The protein belongs to the cytochrome b family. PetD subfamily. In terms of assembly, the 4 large subunits of the cytochrome b6-f complex are cytochrome b6, subunit IV (17 kDa polypeptide, petD), cytochrome f and the Rieske protein, while the 4 small subunits are petG, petL, petM and petN. The complex functions as a dimer.

The protein localises to the plastid. The protein resides in the chloroplast thylakoid membrane. Component of the cytochrome b6-f complex, which mediates electron transfer between photosystem II (PSII) and photosystem I (PSI), cyclic electron flow around PSI, and state transitions. In Welwitschia mirabilis (Tree tumbo), this protein is Cytochrome b6-f complex subunit 4.